Consider the following 127-residue polypeptide: Large ribosomal subunit protein bL12 (127 aa).

This sequence belongs to the bacterial ribosomal protein bL12 family. As to quaternary structure, homodimer. Part of the ribosomal stalk of the 50S ribosomal subunit. Forms a multimeric L10(L12)X complex, where L10 forms an elongated spine to which 2 to 4 L12 dimers bind in a sequential fashion. Binds GTP-bound translation factors.

Forms part of the ribosomal stalk which helps the ribosome interact with GTP-bound translation factors. Is thus essential for accurate translation. This chain is Large ribosomal subunit protein bL12, found in Acidiphilium cryptum (strain JF-5).